The primary structure comprises 938 residues: Isoleucine--tRNA ligase (938 aa).

The short motif at 58–68 is the 'HIGH' region element; that stretch reads PYANGSIHIGH. Lys-183 is subject to N6-acetyllysine. Glu-561 provides a ligand contact to L-isoleucyl-5'-AMP. A 'KMSKS' region motif is present at residues 602–606; the sequence is KMSKS. Lys-605 provides a ligand contact to ATP. Cys-901, Cys-904, Cys-921, and Cys-924 together coordinate Zn(2+).

It belongs to the class-I aminoacyl-tRNA synthetase family. IleS type 1 subfamily. As to quaternary structure, monomer. Zn(2+) serves as cofactor.

It is found in the cytoplasm. The enzyme catalyses tRNA(Ile) + L-isoleucine + ATP = L-isoleucyl-tRNA(Ile) + AMP + diphosphate. In terms of biological role, catalyzes the attachment of isoleucine to tRNA(Ile). As IleRS can inadvertently accommodate and process structurally similar amino acids such as valine, to avoid such errors it has two additional distinct tRNA(Ile)-dependent editing activities. One activity is designated as 'pretransfer' editing and involves the hydrolysis of activated Val-AMP. The other activity is designated 'posttransfer' editing and involves deacylation of mischarged Val-tRNA(Ile). In Escherichia coli O7:K1 (strain IAI39 / ExPEC), this protein is Isoleucine--tRNA ligase.